The chain runs to 601 residues: Serine/threonine-protein phosphatase 2A 65 kDa regulatory subunit A beta isoform (601 aa).

Ala-2 carries the N-acetylalanine modification. HEAT repeat units follow at residues 20-58, 59-96, 97-135, 136-173, 174-212, 213-251, 252-290, 291-333, 334-372, 373-411, 412-450, 451-489, 490-528, 529-567, and 568-601; these read DSLY…GVER, TRTE…GGPD, FAHC…TPVA, LEAH…ASNA, VKAE…ELDS, VKTE…SQDD, LEAL…GPKI, ALSD…RETV, IMNQ…GKEN, TIEH…GIRQ, LSQS…GVEF, FDEK…GTEW, AQNT…GKEI, TTKQ…DTNA, and LQGE…LALA.

Belongs to the phosphatase 2A regulatory subunit A family. In terms of assembly, PP2A consists of a common heterodimeric core enzyme, composed of a 36 kDa catalytic subunit (subunit C) and a 65 kDa constant regulatory subunit (PR65 or subunit A), that associates with a variety of regulatory subunits. Proteins that associate with the core dimer include three families of regulatory subunits B (the R2/B/PR55/B55, R3/B''/PR72/PR130/PR59 and R5/B'/B56 families), the 48 kDa variable regulatory subunit, viral proteins, and cell signaling molecules. Interacts with IPO9. Interacts with SGO1. Interacts with RAF1.

In terms of biological role, the PR65 subunit of protein phosphatase 2A serves as a scaffolding molecule to coordinate the assembly of the catalytic subunit and a variable regulatory B subunit. The chain is Serine/threonine-protein phosphatase 2A 65 kDa regulatory subunit A beta isoform (Ppp2r1b) from Rattus norvegicus (Rat).